The primary structure comprises 214 residues: Probable transaldolase (214 aa).

K83 acts as the Schiff-base intermediate with substrate in catalysis.

It belongs to the transaldolase family. Type 3B subfamily.

Its subcellular location is the cytoplasm. The catalysed reaction is D-sedoheptulose 7-phosphate + D-glyceraldehyde 3-phosphate = D-erythrose 4-phosphate + beta-D-fructose 6-phosphate. Its pathway is carbohydrate degradation; pentose phosphate pathway; D-glyceraldehyde 3-phosphate and beta-D-fructose 6-phosphate from D-ribose 5-phosphate and D-xylulose 5-phosphate (non-oxidative stage): step 2/3. Transaldolase is important for the balance of metabolites in the pentose-phosphate pathway. This chain is Probable transaldolase, found in Maridesulfovibrio salexigens (strain ATCC 14822 / DSM 2638 / NCIMB 8403 / VKM B-1763) (Desulfovibrio salexigens).